Consider the following 369-residue polypeptide: Phospho-N-acetylmuramoyl-pentapeptide-transferase (369 aa).

10 consecutive transmembrane segments (helical) span residues 2–22 (IPLL…TQLF), 55–75 (AVVI…SWWI), 82–102 (PSVS…VGFL), 120–140 (AKLI…INFA), 163–183 (LAFA…NLII), 196–216 (LDGL…LIGI), 240–260 (PLDL…FLWW), 267–287 (IFMG…FAIL), 292–312 (ILLA…ILQV), and 349–369 (ILGG…WVVF).

This sequence belongs to the glycosyltransferase 4 family. MraY subfamily. Requires Mg(2+) as cofactor.

Its subcellular location is the cell membrane. The catalysed reaction is UDP-N-acetyl-alpha-D-muramoyl-L-alanyl-gamma-D-glutamyl-meso-2,6-diaminopimeloyl-D-alanyl-D-alanine + di-trans,octa-cis-undecaprenyl phosphate = di-trans,octa-cis-undecaprenyl diphospho-N-acetyl-alpha-D-muramoyl-L-alanyl-D-glutamyl-meso-2,6-diaminopimeloyl-D-alanyl-D-alanine + UMP. It participates in cell wall biogenesis; peptidoglycan biosynthesis. In terms of biological role, catalyzes the initial step of the lipid cycle reactions in the biosynthesis of the cell wall peptidoglycan: transfers peptidoglycan precursor phospho-MurNAc-pentapeptide from UDP-MurNAc-pentapeptide onto the lipid carrier undecaprenyl phosphate, yielding undecaprenyl-pyrophosphoryl-MurNAc-pentapeptide, known as lipid I. This is Phospho-N-acetylmuramoyl-pentapeptide-transferase from Renibacterium salmoninarum (strain ATCC 33209 / DSM 20767 / JCM 11484 / NBRC 15589 / NCIMB 2235).